Here is a 364-residue protein sequence, read N- to C-terminus: Aminomethyltransferase (364 aa).

This sequence belongs to the GcvT family. As to quaternary structure, the glycine cleavage system is composed of four proteins: P, T, L and H.

It carries out the reaction N(6)-[(R)-S(8)-aminomethyldihydrolipoyl]-L-lysyl-[protein] + (6S)-5,6,7,8-tetrahydrofolate = N(6)-[(R)-dihydrolipoyl]-L-lysyl-[protein] + (6R)-5,10-methylene-5,6,7,8-tetrahydrofolate + NH4(+). Functionally, the glycine cleavage system catalyzes the degradation of glycine. This chain is Aminomethyltransferase, found in Shewanella pealeana (strain ATCC 700345 / ANG-SQ1).